Here is a 258-residue protein sequence, read N- to C-terminus: Aquaporin PIP1-2 (258 aa).

The disordered stretch occupies residues 1–37; the sequence is MEGKEEDVRLGANKFTERQPIGTAAQSQDKDYKEPPP. The Cytoplasmic portion of the chain corresponds to 1–55; that stretch reads MEGKEEDVRLGANKFTERQPIGTAAQSQDKDYKEPPPAPLFEPGELSSWSFYRAG. A helical membrane pass occupies residues 56-76; it reads IAEFVATFLFLYITILTVMGV. Topologically, residues 77–89 are extracellular; that stretch reads VKSSTKCSTVGIQ. A helical membrane pass occupies residues 90–110; that stretch reads GIAWAFGGMIFALVYCTAGIS. The Cytoplasmic portion of the chain corresponds to 111–133; that stretch reads GGHINPAVTFGLFLARKLSLTRA. The NPA 1 signature appears at 115 to 117; sequence NPA. The chain crosses the membrane as a helical span at residues 134–154; sequence LFYMVMQCLGAICGAGVVKGF. Topologically, residues 155–175 are extracellular; that stretch reads QKGLYENNGGGANVVAPGYTK. A helical membrane pass occupies residues 176 to 196; the sequence is GDGLGAEIVGTFILVYTVFSA. Over 197-209 the chain is Cytoplasmic; the sequence is TDAKRSARDSHVP. A helical membrane pass occupies residues 210–230; the sequence is ILAPLPIGFAVFLVHLATIPI. The Extracellular portion of the chain corresponds to 231–258; sequence TGTGINPARSLGAAIIYNKGHAWDDHWI. Residues 236-238 carry the NPA 2 motif; that stretch reads NPA.

Belongs to the MIP/aquaporin (TC 1.A.8) family. PIP (TC 1.A.8.11) subfamily. As to expression, barely detectable in roots, leaves and fruits.

It is found in the cell membrane. Its function is as follows. Water channel required to facilitate the transport of water across cell membrane; mercury-insensitive. Contributes to the tolerance to multiple abiotic stresses including salt (NaCl), cold and water deprivation, by modulating cytosolic K(+)/Na(+) ratio, maintaining osmotic balance, and reducing membrane injury (e.g. oxidative injury). The protein is Aquaporin PIP1-2 of Musa acuminata (Banana).